We begin with the raw amino-acid sequence, 195 residues long: Calcineurin B homologous protein 1 (195 aa).

Residue glycine 2 is the site of N-myristoyl glycine attachment. The Necessary for association with microtubule and interaction with GAPDH motif lies at 2–6 (GSRAS). EF-hand domains lie at 26-61 (SQIT…AINP), 71-106 (FSEG…NGPE), 110-145 (SRSN…MVGV), and 151-186 (QLGS…VDVE). Ca(2+) is bound by residues aspartate 123, aspartate 125, aspartate 127, lysine 129, and glutamate 134. Residues 138–147 (VLRMMVGVNI) carry the Nuclear export signal 1 motif. Positions 164, 166, 168, and 175 each coordinate Ca(2+). Positions 176–185 (FVKVLEKVDV) match the Nuclear export signal 2 motif.

Belongs to the calcineurin regulatory subunit family. CHP subfamily. As to quaternary structure, monomer. Interacts with STK17B; the interaction occurs in a calcium-independent manner and induces the translocation of CHP1 from the Golgi to the nucleus. Interacts with GAPDH; the interaction is direct, occurs in a N-myristoylation-dependent manner and facilitates the ability of CHP1 to bind microtubules. Interacts with KIF1B (via the C-terminal end of the kinesin-motor domain); the interaction occurs in a calcium-dependent manner. Associates (via C-terminal domain) with microtubules; the association occurs with polymerized microtubules during the cell cycle in a myristoylation- and calcium-independent manner and is enhanced by GAPDH. Interacts with PPP3CA. Interacts with SLC9A1/NHE1 (via the cytoplasmic C-terminal domain); the interaction occurs at the plasma membrane in a calcium-dependent manner and at a domain that is critical for growth factor stimulation of the exchanger. Interacts with SLC9A3; increases SLC9A3 trafficking and activity at the plasma membrane. Phosphorylated; decreased phosphorylation is associated with an increase in SLC9A1/NHE1 Na(+)/H(+) exchange activity. Phosphorylation occurs in serum-dependent manner. The phosphorylation state may regulate the binding to SLC9A1/NHE1. In terms of processing, both N-myristoylation and calcium-mediated conformational changes are essential for its function in exocytic traffic. N-myristoylation is required for its association with microtubules and interaction with GAPDH, but not for the constitutive association to membranes.

The protein localises to the nucleus. It is found in the cytoplasm. Its subcellular location is the cytoskeleton. It localises to the endomembrane system. The protein resides in the endoplasmic reticulum-Golgi intermediate compartment. The protein localises to the endoplasmic reticulum. It is found in the cell membrane. Its subcellular location is the membrane. Its function is as follows. Calcium-binding protein involved in different processes such as regulation of vesicular trafficking, plasma membrane Na(+)/H(+) exchanger and gene transcription. Involved in the constitutive exocytic membrane traffic. Mediates the association between microtubules and membrane-bound organelles of the endoplasmic reticulum and Golgi apparatus and is also required for the targeting and fusion of transcytotic vesicles (TCV) with the plasma membrane. Functions as an integral cofactor in cell pH regulation by controlling plasma membrane-type Na(+)/H(+) exchange activity. Affects the pH sensitivity of SLC9A1/NHE1 by increasing its sensitivity at acidic pH. Required for the stabilization and localization of SLC9A1/NHE1 at the plasma membranes. Inhibits serum- and GTPase-stimulated Na(+)/H(+) exchange. Plays a role as an inhibitor of ribosomal RNA transcription by repressing the nucleolar UBF1 transcriptional activity. May sequester UBF1 in the nucleoplasm and limit its translocation to the nucleolus. Associates to the ribosomal gene promoter. Acts as a negative regulator of the calcineurin/NFAT signaling pathway. Inhibits NFAT nuclear translocation and transcriptional activity by suppressing the calcium-dependent calcineurin phosphatase activity. Also negatively regulates the kinase activity of the apoptosis-induced kinase STK17B. Inhibits both STK17B auto- and substrate-phosphorylations in a calcium-dependent manner. This chain is Calcineurin B homologous protein 1 (Chp1), found in Mus musculus (Mouse).